Reading from the N-terminus, the 2178-residue chain is Toxin A (2178 aa).

Residues 1–93 (MLITREQLMK…RELIKNSRTS (93 aa)) are four-helical bundle. Residues 98 to 474 (KNLSFIWIGG…KPEVNSTVFF (377 aa)) enclose the GT44 domain. Residues 98 to 474 (KNLSFIWIGG…KPEVNSTVFF (377 aa)) are glucosyltransferase region. Residues 98 to 474 (KNLSFIWIGG…KPEVNSTVFF (377 aa)) form an N-acetylglucosaminyltransferase region region. UDP-N-acetyl-alpha-D-glucosamine contacts are provided by residues 103-105 (IWI), Asn141, 267-271 (SDILR), and 284-286 (DLD). Residues Asp284, Asp286, and Glu520 each coordinate Mg(2+). A UDP-N-acetyl-alpha-D-glucosamine-binding site is contributed by 523–525 (SSW). Residues 549 to 806 (NYEDGLNFNK…RVEQLNKVAE (258 aa)) form an autoprocessing region region. The 1D-myo-inositol hexakisphosphate site is built by Asn557, Lys607, and Lys651. A Peptidase C80 domain is found at 574-787 (VNSTKIYENY…QISNKYVVYW (214 aa)). His657 (for protease activity) is an active-site residue. Catalysis depends on Cys707, which acts as the Nucleophile; for protease activity. Residues 758 to 759 (KR) and Lys782 contribute to the 1D-myo-inositol hexakisphosphate site. Residues 807–1485 (FAKDINSIIQ…VYMEGKIFLN (679 aa)) are translocation region. 14 Cell wall-binding repeats span residues 1799–1818 (EYGWINIDSRWYFFDSINLI), 1820–1839 (KKGYQEIEGERYYFNPNTGV), 1870–1889 (YTGWLTLDGNKYYFQSNSKA), 1890–1909 (VTGLQKISDKYYYFNDNGQM), 1910–1929 (QIKWQIINNNKYYFDGNTGE), 1931–1950 (IIGWFNNNKERYYFDSEGRL), 1951–1970 (LTGYQVIGDKSYYFSDNING), 2004–2023 (YKGWLDLNGNKYYFNSDSIA), 2024–2043 (VTGSYNIKGIQYYFNPKTAV), 2045–2060 (TNGWYTLDNNNYYVSN), 2064–2083 (VLGYQDIDGKGYYFDPSTGI), 2114–2133 (YTGWLHLNGNKYYFGYYNSA), 2134–2153 (VTGWRVLGGKRYFFNIKTGA), and 2155–2174 (TTGLLTLSGKRYYFNEKGEQ).

This sequence belongs to the clostridial glucosylating toxin (LCGT) family. Mn(2+) serves as cofactor. It depends on Mg(2+) as a cofactor. Post-translationally, undergoes autocatalytic cleavage to release the N-terminal part (N-acetylglucosaminyltransferase TcdA), which constitutes the active part of the toxin, in the host cytosol. 1D-myo-inositol hexakisphosphate-binding (InsP6) activates the peptidase C80 domain and promotes autoprocessing.

The protein localises to the secreted. The protein resides in the host endosome membrane. It is found in the host cytoplasm. Its subcellular location is the host cytosol. It localises to the host cell membrane. It carries out the reaction L-threonyl-[protein] + UDP-N-acetyl-alpha-D-glucosamine = 3-O-(N-acetyl-alpha-D-glucosaminyl)-L-threonyl-[protein] + UDP + H(+). With respect to regulation, protease activity is activated upon binding to 1D-myo-inositol hexakisphosphate (InsP6), which induces conformational reorganization. Its function is as follows. Precursor of a cytotoxin, which enters into host cells and mediates autoprocessing to release the active toxin (N-acetylglucosaminyltransferase TcdA) into the host cytosol. Once entered into host cells, acidification in the endosome promotes the membrane insertion of the translocation region and formation of a pore, leading to translocation of the GT44 and peptidase C80 domains across the endosomal membrane. This activates the peptidase C80 domain and autocatalytic processing, releasing the N-terminal part (N-acetylglucosaminyltransferase TcdA), which constitutes the active part of the toxin, in the cytosol. In terms of biological role, active form of the toxin, which is released into the host cytosol following autoprocessing and inactivates small GTPases. Acts by mediating monoglycosylation of small GTPases of the Rho family (Rac1, RhoA, RhoG and Cdc42) in host cells at the conserved threonine residue located in the switch I region ('Thr-37/35'), using UDP-N-acetyl-alpha-D-glucosamine as the sugar donor. Monoglycosylation of host small GTPases completely prevents the recognition of the downstream effector, blocking the GTPases in their inactive form, leading to actin cytoskeleton disruption and cell death. This Clostridium novyi protein is Toxin A (tcdA).